We begin with the raw amino-acid sequence, 254 residues long: Type III pantothenate kinase (254 aa).

6 to 13 lines the ATP pocket; it reads DVGNTNIV. Residue 107-110 coordinates substrate; the sequence is GADR. D109 serves as the catalytic Proton acceptor. D129 is a K(+) binding site. Residue T132 coordinates ATP. T184 lines the substrate pocket.

The protein belongs to the type III pantothenate kinase family. Homodimer. It depends on NH4(+) as a cofactor. Requires K(+) as cofactor.

Its subcellular location is the cytoplasm. The catalysed reaction is (R)-pantothenate + ATP = (R)-4'-phosphopantothenate + ADP + H(+). It functions in the pathway cofactor biosynthesis; coenzyme A biosynthesis; CoA from (R)-pantothenate: step 1/5. Its function is as follows. Catalyzes the phosphorylation of pantothenate (Pan), the first step in CoA biosynthesis. The chain is Type III pantothenate kinase from Exiguobacterium sp. (strain ATCC BAA-1283 / AT1b).